Here is a 152-residue protein sequence, read N- to C-terminus: Large ribosomal subunit protein uL11 (152 aa).

Belongs to the universal ribosomal protein uL11 family. As to quaternary structure, part of the ribosomal stalk of the 50S ribosomal subunit. Interacts with L10 and the large rRNA to form the base of the stalk. L10 forms an elongated spine to which L12 dimers bind in a sequential fashion forming a multimeric L10(L12)X complex. In terms of processing, one or more lysine residues are methylated.

Functionally, forms part of the ribosomal stalk which helps the ribosome interact with GTP-bound translation factors. This Mycoplasmoides gallisepticum (strain R(low / passage 15 / clone 2)) (Mycoplasma gallisepticum) protein is Large ribosomal subunit protein uL11.